The primary structure comprises 1188 residues: Phospholipid-transporting ATPase IB (1188 aa).

At 1–94 (MLNGAGLDKA…PRFLYEQIRR (94 aa)) the chain is on the cytoplasmic side. A Phosphothreonine modification is found at T45. Residues 95–115 (AANAFFLFIALLQQIPDVSPT) traverse the membrane as a helical segment. The Extracellular segment spans residues 116 to 119 (GRYT). A helical membrane pass occupies residues 120-140 (TLVPLIIILTIAGIKEIVEDF). At 141–316 (KRHKADNAVN…SNVEKVTNVQ (176 aa)) the chain is on the cytoplasmic side. The helical transmembrane segment at 317–337 (ILVLFGILLVMALVSSAGALY) threads the bilayer. Topologically, residues 338–364 (WNRSHGEKNWYIKKMDTTSDNFGYNLL) are extracellular. Residues 365–385 (TFIILYNNLIPISLLVTLEVV) form a helical membrane-spanning segment. The Cytoplasmic portion of the chain corresponds to 386 to 887 (KYTQALFINW…CILYCFYKNV (502 aa)). D428 acts as the 4-aspartylphosphate intermediate in catalysis. Residues D428, K429, T430, E528, F569, K592, R625, T705, G706, D707, R795, and K801 each coordinate ATP. Residue D428 participates in Mg(2+) binding. T430 is a Mg(2+) binding site. D821 is a binding site for Mg(2+). 2 residues coordinate ATP: N824 and D825. Mg(2+) is bound at residue D825. A helical membrane pass occupies residues 888–908 (VLYIIELWFAFVNGFSGQILF). Over 909 to 910 (ER) the chain is Extracellular. The chain crosses the membrane as a helical span at residues 911-931 (WCIGLYNVIFTALPPFTLGIF). Topologically, residues 932–959 (ERSCTQESMLRFPQLYKITQNGEGFNTK) are cytoplasmic. A helical transmembrane segment spans residues 960–980 (VFWGHCINALVHSLILFWFPM). The Extracellular segment spans residues 981-997 (KALEHDTVLTSGHATDY). A helical membrane pass occupies residues 998–1018 (LFVGNIVYTYVVVTVCLKAGL). The Cytoplasmic segment spans residues 1019–1028 (ETTAWTKFSH). Residues 1029–1049 (LAVWGSMLTWLVFFGIYSTIW) form a helical membrane-spanning segment. The Extracellular segment spans residues 1050 to 1063 (PTIPIAPDMRGQAT). A helical membrane pass occupies residues 1064–1084 (MVLSSAHFWLGLFLVPTACLI). Residues 1085 to 1188 (EDVAWRAAKH…DTTKKKSRKK (104 aa)) are Cytoplasmic-facing. A disordered region spans residues 1162–1188 (SQEEHGAVSQEEVIRAYDTTKKKSRKK). A compositionally biased stretch (basic and acidic residues) spans 1163–1182 (QEEHGAVSQEEVIRAYDTTK).

The protein belongs to the cation transport ATPase (P-type) (TC 3.A.3) family. Type IV subfamily. Component of a P4-ATPase flippase complex which consists of a catalytic alpha subunit and an accessory beta subunit. Interacts with TMEM30A to form a flippase complex. Mg(2+) is required as a cofactor. Strongly expressed in the brain, cerebellum, retina and testis.

It localises to the membrane. The protein localises to the golgi apparatus membrane. The protein resides in the endosome membrane. It is found in the cell membrane. Its subcellular location is the photoreceptor outer segment membrane. It localises to the photoreceptor inner segment membrane. It catalyses the reaction ATP + H2O + phospholipidSide 1 = ADP + phosphate + phospholipidSide 2.. The catalysed reaction is a 1,2-diacyl-sn-glycero-3-phospho-L-serine(out) + ATP + H2O = a 1,2-diacyl-sn-glycero-3-phospho-L-serine(in) + ADP + phosphate + H(+). The enzyme catalyses a 1,2-diacyl-sn-glycero-3-phosphoethanolamine(in) + ATP + H2O = a 1,2-diacyl-sn-glycero-3-phosphoethanolamine(out) + ADP + phosphate + H(+). In terms of biological role, catalytic component of a P4-ATPase flippase complex which catalyzes the hydrolysis of ATP coupled to the transport of aminophospholipids from the outer to the inner leaflet of various membranes and ensures the maintenance of asymmetric distribution of phospholipids. Able to translocate phosphatidylserine, but not phosphatidylcholine. Phospholipid translocation also seems to be implicated in vesicle formation and in uptake of lipid signaling molecules. Reconstituted to liposomes, the ATP8A2:TMEM30A flippase complex predominantly transports phosphatidylserine (PS) and to a lesser extent phosphatidylethanolamine (PE). Phospholipid translocation is not associated with a countertransport of an inorganic ion or other charged substrate from the cytoplasmic side toward the exoplasm in connection with the phosphorylation from ATP. ATP8A2:TMEM30A may be involved in regulation of neurite outgrowth. Proposed to function in the generation and maintenance of phospholipid asymmetry in photoreceptor disk membranes and neuronal axon membranes. May be involved in vesicle trafficking in neuronal cells. Required for normal visual and auditory function; involved in photoreceptor and inner ear spiral ganglion cell survival. This is Phospholipid-transporting ATPase IB from Homo sapiens (Human).